The chain runs to 274 residues: Cytochrome b-c1 complex subunit Rieske, mitochondrial (274 aa).

Residues 79–103 (SHTDVKVPDFSEYRRLEVLDSTKSS) lie on the Mitochondrial matrix side of the membrane. Residues 104 to 140 (RESSEARKGFSYLVTGVTTVGVAYAAKNAVTQFVSSM) form a helical membrane-spanning segment. Residues 141–274 (SASADVLALA…FTSDDMVIVG (134 aa)) lie on the Mitochondrial intermembrane side of the membrane. A Rieske domain is found at 187 to 272 (EAAVELSQLR…YEFTSDDMVI (86 aa)). Residues Cys217, His219, Cys236, His239, and Ser241 each coordinate [2Fe-2S] cluster. Cys222 and Cys238 are disulfide-bonded.

The protein belongs to the Rieske iron-sulfur protein family. In terms of assembly, component of the ubiquinol-cytochrome c oxidoreductase (cytochrome b-c1 complex, complex III, CIII), a multisubunit enzyme composed of 11 subunits. The complex is composed of 3 respiratory subunits cytochrome b, cytochrome c1 and Rieske protein UQCRFS1, 2 core protein subunits UQCRC1/QCR1 and UQCRC2/QCR2, and 6 low-molecular weight protein subunits UQCRH/QCR6, UQCRB/QCR7, UQCRQ/QCR8, UQCR10/QCR9, UQCR11/QCR10 and subunit 9, the cleavage product of Rieske protein UQCRFS1. The complex exists as an obligatory dimer and forms supercomplexes (SCs) in the inner mitochondrial membrane with NADH-ubiquinone oxidoreductase (complex I, CI) and cytochrome c oxidase (complex IV, CIV), resulting in different assemblies (supercomplex SCI(1)III(2)IV(1) and megacomplex MCI(2)III(2)IV(2)). Incorporation of the Rieske protein UQCRFS1 is the penultimate step in complex III assembly. Interacts with TTC19, which is involved in the clearance of UQCRFS1 fragments. Component of the ubiquinol-cytochrome c oxidoreductase (cytochrome b-c1 complex, complex III, CIII). Subunit 9 corresponds to the mitochondrial targeting sequence (MTS) of Rieske protein UQCRFS1. It is retained after processing and incorporated inside complex III, where it remains bound to the complex and localizes between the 2 core subunits UQCRC1/QCR1 and UQCRC2/QCR2. Requires [2Fe-2S] cluster as cofactor. In terms of processing, proteolytic processing is necessary for the correct insertion of UQCRFS1 in the complex III dimer. Several fragments are generated during UQCRFS1 insertion, most probably due to the endogenous matrix-processing peptidase (MPP) activity of the 2 core protein subunits UQCRC1/QCR1 and UQCRC2/QCR2, which are homologous to the 2 mitochondrial-processing peptidase (MPP) subunits beta-MPP and alpha-MPP respectively. The action of the protease is also necessary for the clearance of the UQCRFS1 fragments.

The protein localises to the mitochondrion inner membrane. The enzyme catalyses a quinol + 2 Fe(III)-[cytochrome c](out) = a quinone + 2 Fe(II)-[cytochrome c](out) + 2 H(+)(out). In terms of biological role, component of the ubiquinol-cytochrome c oxidoreductase, a multisubunit transmembrane complex that is part of the mitochondrial electron transport chain which drives oxidative phosphorylation. The respiratory chain contains 3 multisubunit complexes succinate dehydrogenase (complex II, CII), ubiquinol-cytochrome c oxidoreductase (cytochrome b-c1 complex, complex III, CIII) and cytochrome c oxidase (complex IV, CIV), that cooperate to transfer electrons derived from NADH and succinate to molecular oxygen, creating an electrochemical gradient over the inner membrane that drives transmembrane transport and the ATP synthase. The cytochrome b-c1 complex catalyzes electron transfer from ubiquinol to cytochrome c, linking this redox reaction to translocation of protons across the mitochondrial inner membrane, with protons being carried across the membrane as hydrogens on the quinol. In the process called Q cycle, 2 protons are consumed from the matrix, 4 protons are released into the intermembrane space and 2 electrons are passed to cytochrome c. The Rieske protein is a catalytic core subunit containing a [2Fe-2S] iron-sulfur cluster. It cycles between 2 conformational states during catalysis to transfer electrons from the quinol bound in the Q(0) site in cytochrome b to cytochrome c1. Incorporation of UQCRFS1 is the penultimate step in complex III assembly. Component of the ubiquinol-cytochrome c oxidoreductase (cytochrome b-c1 complex, complex III, CIII). UQCRFS1 undergoes proteolytic processing once it is incorporated in the complex III dimer. One of the fragments, called subunit 9, corresponds to its mitochondrial targeting sequence (MTS). The proteolytic processing is necessary for the correct insertion of UQCRFS1 in the complex III dimer, but the persistence of UQCRFS1-derived fragments may prevent newly imported UQCRFS1 to be processed and assembled into complex III and is detrimental for the complex III structure and function. The sequence is that of Cytochrome b-c1 complex subunit Rieske, mitochondrial (UQCRFS1) from Pan paniscus (Pygmy chimpanzee).